A 113-amino-acid polypeptide reads, in one-letter code: MFSIRIATVVLAASALLAAASPITNTETPVNQCGSGSIQCCESVQSASAAQAAGILGPLDILTNLQGLVASHCSPLAAVGVSGTSCSSQTVCCKDVSKSGLVNLGCSPINLNL.

The first 20 residues, 1–20 (MFSIRIATVVLAASALLAAA), serve as a signal peptide directing secretion. Intrachain disulfides connect cysteine 33–cysteine 92, cysteine 40–cysteine 86, cysteine 41–cysteine 73, and cysteine 93–cysteine 106.

It belongs to the fungal hydrophobin family. As to quaternary structure, self-assembles to form functional amyloid fibrils called rodlets. Self-assembly into fibrillar rodlets occurs spontaneously at hydrophobic:hydrophilic interfaces and the rodlets further associate laterally to form amphipathic monolayers.

It is found in the secreted. The protein localises to the cell wall. Functionally, aerial growth, conidiation, and dispersal of filamentous fungi in the environment rely upon a capability of their secreting small amphipathic proteins called hydrophobins (HPBs) with low sequence identity. Class I can self-assemble into an outermost layer of rodlet bundles on aerial cell surfaces, conferring cellular hydrophobicity that supports fungal growth, development and dispersal; whereas Class II form highly ordered films at water-air interfaces through intermolecular interactions but contribute nothing to the rodlet structure. Fbh1 is a fruiting body-specific class I hydrophobin that is involved in the growth rate and primordia formation. In Pleurotus ostreatus (strain PC15) (Oyster mushroom), this protein is Fruiting body-specific class I hydrophobin fbh1.